Consider the following 25-residue polypeptide: Caerin-2.3 (25 aa).

As to expression, expressed by the skin parotoid and/or rostral glands.

It localises to the secreted. Functionally, acts as a male sex pheromone that attracts females. Has no antimicrobial activity. The protein is Caerin-2.3 of Ranoidea caerulea (Green tree frog).